The sequence spans 204 residues: Tetraspanin-13 (204 aa).

Residues 1 to 19 (MVCGGFSCSKNCLCALNLL) lie on the Cytoplasmic side of the membrane. Residues 20–40 (YTLVSLLLIGIAAWGIGFGLI) form a helical membrane-spanning segment. The Extracellular portion of the chain corresponds to 41–44 (SSLR). The helical transmembrane segment at 45–65 (VVGVVIAVGIFLFLIALVGLI) threads the bilayer. Residues 66–72 (GAVKHHQ) are Cytoplasmic-facing. Residues 73-93 (VLLFFYMIILLLVFIVQFSVS) traverse the membrane as a helical segment. Residues 94-167 (CACLALNREQ…IGEYAGEVLR (74 aa)) lie on the Extracellular side of the membrane. Asn-113 and Asn-137 each carry an N-linked (GlcNAc...) asparagine glycan. At Ser-143 the chain carries Phosphoserine. A helical transmembrane segment spans residues 168–188 (FVGGIGLFFSFTEILGVWLTY). Topologically, residues 189-204 (RYRNQKDPRANPSAFL) are cytoplasmic.

This sequence belongs to the tetraspanin (TM4SF) family.

The protein localises to the membrane. The chain is Tetraspanin-13 (Tspan13) from Mus musculus (Mouse).